A 328-amino-acid chain; its full sequence is D-alanine--D-alanine ligase (328 aa).

One can recognise an ATP-grasp domain in the interval 118–317; that stretch reads LSVLTKFNIP…MPQMLDNEIT (200 aa). Residue 146 to 201 participates in ATP binding; the sequence is KKALGLPFFVKPNQSGSSLGVSKVDALDQLEKALEFAFAEDNEILIESYLNGTEVS. Mg(2+)-binding residues include Asp272, Glu284, and Asn286.

It belongs to the D-alanine--D-alanine ligase family. Mg(2+) serves as cofactor. The cofactor is Mn(2+).

It localises to the cytoplasm. It carries out the reaction 2 D-alanine + ATP = D-alanyl-D-alanine + ADP + phosphate + H(+). It participates in cell wall biogenesis; peptidoglycan biosynthesis. Functionally, cell wall formation. This chain is D-alanine--D-alanine ligase, found in Flavobacterium psychrophilum (strain ATCC 49511 / DSM 21280 / CIP 103535 / JIP02/86).